We begin with the raw amino-acid sequence, 160 residues long: SsrA-binding protein (160 aa).

Over residues 137–153 (DKRDDIKTREWKQDKAR) the composition is skewed to basic and acidic residues. The tract at residues 137–160 (DKRDDIKTREWKQDKARIMKNANR) is disordered.

This sequence belongs to the SmpB family.

The protein localises to the cytoplasm. Functionally, required for rescue of stalled ribosomes mediated by trans-translation. Binds to transfer-messenger RNA (tmRNA), required for stable association of tmRNA with ribosomes. tmRNA and SmpB together mimic tRNA shape, replacing the anticodon stem-loop with SmpB. tmRNA is encoded by the ssrA gene; the 2 termini fold to resemble tRNA(Ala) and it encodes a 'tag peptide', a short internal open reading frame. During trans-translation Ala-aminoacylated tmRNA acts like a tRNA, entering the A-site of stalled ribosomes, displacing the stalled mRNA. The ribosome then switches to translate the ORF on the tmRNA; the nascent peptide is terminated with the 'tag peptide' encoded by the tmRNA and targeted for degradation. The ribosome is freed to recommence translation, which seems to be the essential function of trans-translation. This chain is SsrA-binding protein, found in Edwardsiella ictaluri (strain 93-146).